The following is a 465-amino-acid chain: Lactaldehyde dehydrogenase (465 aa).

220 to 225 serves as a coordination point for NAD(+); it reads GSVEVG. Active-site residues include Glu240 and Cys274.

The protein belongs to the aldehyde dehydrogenase family. Homotetramer.

The catalysed reaction is (S)-lactaldehyde + NAD(+) + H2O = (S)-lactate + NADH + 2 H(+). Its pathway is cofactor biosynthesis; coenzyme F420 biosynthesis. Its function is as follows. Involved in F420 biosynthesis through the oxidation of lactaldehyde to lactate. The chain is Lactaldehyde dehydrogenase from Methanococcus aeolicus (strain ATCC BAA-1280 / DSM 17508 / OCM 812 / Nankai-3).